A 284-amino-acid chain; its full sequence is Proton-translocating ferredoxin:NAD(+) oxidoreductase complex subunit B (284 aa).

A hydrophobic region spans residues 1–26 (MNTVIMILVVMTIIGLIFGLVLAYVN). Residues 32–92 (EVNPLVDLVE…AEQVAKLTGK (61 aa)) form the 4Fe-4S domain. [4Fe-4S] cluster is bound by residues cysteine 49, cysteine 52, cysteine 57, cysteine 75, cysteine 138, cysteine 142, cysteine 148, cysteine 152, cysteine 172, cysteine 175, cysteine 178, cysteine 182, cysteine 217, cysteine 220, cysteine 223, cysteine 227, cysteine 246, cysteine 249, cysteine 254, and cysteine 258. 4Fe-4S ferredoxin-type domains lie at 133 to 162 (GGPK…MGSN), 163 to 192 (GLPI…FRPV), 206 to 237 (GGAV…VENN), and 239 to 269 (AVVD…IVSG).

The protein belongs to the 4Fe4S bacterial-type ferredoxin family. RnfB subfamily. In terms of assembly, the complex is composed of six subunits: RnfA, RnfB, RnfC, RnfD, RnfE and RnfG. The cofactor is [4Fe-4S] cluster.

It localises to the cell membrane. Its function is as follows. Part of a membrane-bound complex that couples electron transfer with translocation of ions across the membrane. Couples electron transfer from reduced ferredoxin to NAD(+) with translocation of H(+) out of the cell. Essential for energy conservation during autotrophic growth. Contributes to ATP synthesis during heterotrophic growth. The polypeptide is Proton-translocating ferredoxin:NAD(+) oxidoreductase complex subunit B (Clostridium ljungdahlii (strain ATCC 55383 / DSM 13528 / PETC)).